The following is a 185-amino-acid chain: Capsid protein (185 aa).

Residues 136-185 (NAPILSTLPETTVVRRRDRGRSPRRRTPSPRRRRSQSPRRRRSQSRESQC) form a disordered region. A compositionally biased stretch (basic residues) spans 149–178 (VRRRDRGRSPRRRTPSPRRRRSQSPRRRRS). Residues serine 157, serine 164, and serine 172 each carry the phosphoserine; by host modification. The 1; half-length repeat unit spans residues 157–163 (SPRRRTP). Residues 157–179 (SPRRRTPSPRRRRSQSPRRRRSQ) form a 3 X 8 AA repeats of S-P-R-R-R-[PR]-S-Q region. A Bipartite nuclear localization signal motif is present at residues 160-177 (RRTPSPRRRRSQSPRRRR). 2 tandem repeats follow at residues 164–171 (SPRRRRSQ) and 172–179 (SPRRRRSQ). Residues 179 to 185 (QSRESQC) are RNA binding.

This sequence belongs to the orthohepadnavirus core antigen family. As to quaternary structure, homodimerizes, then multimerizes. Interacts with cytosol exposed regions of viral L glycoprotein present in the reticulum-to-Golgi compartment. Interacts with human FLNB. Phosphorylated form interacts with host importin alpha; this interaction depends on the exposure of the NLS, which itself depends upon genome maturation and/or phosphorylation of the capsid protein. Interacts with host NUP153. Post-translationally, phosphorylated by host SRPK1, SRPK2, and maybe protein kinase C or GAPDH. Phosphorylation is critical for pregenomic RNA packaging. Protein kinase C phosphorylation is stimulated by HBx protein and may play a role in transport of the viral genome to the nucleus at the late step during the viral replication cycle.

It localises to the virion. The protein resides in the host cytoplasm. Functionally, self assembles to form an icosahedral capsid. Most capsids appear to be large particles with an icosahedral symmetry of T=4 and consist of 240 copies of capsid protein, though a fraction forms smaller T=3 particles consisting of 180 capsid proteins. Entering capsids are transported along microtubules to the nucleus. Phosphorylation of the capsid is thought to induce exposure of nuclear localization signal in the C-terminal portion of the capsid protein that allows binding to the nuclear pore complex via the importin (karyopherin-) alpha and beta. Capsids are imported in intact form through the nuclear pore into the nuclear basket, where it probably binds NUP153. Only capsids that contain the mature viral genome can release the viral DNA and capsid protein into the nucleoplasm. Immature capsids get stuck in the basket. Capsids encapsulate the pre-genomic RNA and the P protein. Pre-genomic RNA is reverse-transcribed into DNA while the capsid is still in the cytoplasm. The capsid can then either be directed to the nucleus, providing more genomes for transcription, or bud through the endoplasmic reticulum to provide new virions. The protein is Capsid protein of Hepatitis B virus genotype A1 subtype adw (isolate Philippines/pFDW294/1988) (HBV-A).